Consider the following 764-residue polypeptide: FAST kinase domain-containing protein 5, mitochondrial (764 aa).

Residues M1–S27 constitute a mitochondrion transit peptide. Residues I68–G94 form a disordered region. Residues S81–L93 are compositionally biased toward polar residues. At S95 the chain carries Phosphoserine. K507 carries the N6-acetyllysine modification. Residues L697–E757 enclose the RAP domain.

This sequence belongs to the FAST kinase family. Found in a complex with GRSF1, DDX28, DHX30 and FASTKD2. Associates with the 12S mitochondrial rRNA (12S mt-rRNA).

It is found in the mitochondrion matrix. It localises to the mitochondrion nucleoid. In terms of biological role, plays an important role in the processing of non-canonical mitochondrial mRNA precursors. The protein is FAST kinase domain-containing protein 5, mitochondrial (FASTKD5) of Pongo abelii (Sumatran orangutan).